The following is a 289-amino-acid chain: Ribosomal RNA small subunit methyltransferase I (289 aa).

This sequence belongs to the methyltransferase superfamily. RsmI family.

It localises to the cytoplasm. It catalyses the reaction cytidine(1402) in 16S rRNA + S-adenosyl-L-methionine = 2'-O-methylcytidine(1402) in 16S rRNA + S-adenosyl-L-homocysteine + H(+). In terms of biological role, catalyzes the 2'-O-methylation of the ribose of cytidine 1402 (C1402) in 16S rRNA. In Helicobacter pylori (strain J99 / ATCC 700824) (Campylobacter pylori J99), this protein is Ribosomal RNA small subunit methyltransferase I.